The following is a 1224-amino-acid chain: Bifunctional protein PutA (1224 aa).

The tract at residues M1 to V25 is disordered. The segment covering P9–P23 has biased composition (low complexity). Residues L164–K501 form a proline dehydrogenase region. Residues T576–H1032 form an aldehyde dehydrogenase region. Residues E800 and C834 contribute to the active site.

It in the N-terminal section; belongs to the proline dehydrogenase family. In the C-terminal section; belongs to the aldehyde dehydrogenase family. FAD serves as cofactor.

The enzyme catalyses L-proline + a quinone = (S)-1-pyrroline-5-carboxylate + a quinol + H(+). The catalysed reaction is L-glutamate 5-semialdehyde + NAD(+) + H2O = L-glutamate + NADH + 2 H(+). It participates in amino-acid degradation; L-proline degradation into L-glutamate; L-glutamate from L-proline: step 1/2. Its pathway is amino-acid degradation; L-proline degradation into L-glutamate; L-glutamate from L-proline: step 2/2. Oxidizes proline to glutamate for use as a carbon and nitrogen source, and also functions as a transcriptional repressor of its own gene. The sequence is that of Bifunctional protein PutA (putA) from Rhizobium meliloti (Ensifer meliloti).